The following is a 426-amino-acid chain: Target of rapamycin complex 2 subunit AVO2 (426 aa).

ANK repeat units follow at residues 4-33 (EPSV…DLLT), 39-68 (NGWS…DKHE), 74-104 (KGNT…FINH), 108-137 (NGRA…DLWV), and 141-171 (NGDT…SLDD). A disordered region spans residues 259-302 (STHTTSGNGGNRRSSITNPVFNPRKPTLSTDSFSSSSNSSSRLR). Polar residues predominate over residues 260-278 (THTTSGNGGNRRSSITNPV). Residues 285–302 (TLSTDSFSSSSNSSSRLR) show a composition bias toward low complexity. Phosphoserine is present on residues Ser-315 and Ser-350. A compositionally biased stretch (polar residues) spans 350 to 359 (SNDNVRGDSQ). The disordered stretch occupies residues 350 to 392 (SNDNVRGDSQTATINDDGGGGNGGDATIGMGLRKDPDDENENK). Gly residues predominate over residues 366–375 (DGGGGNGGDA). Over residues 381–392 (LRKDPDDENENK) the composition is skewed to basic and acidic residues.

In terms of assembly, the target of rapamycin complex 2 (TORC2) is composed of at least AVO1, AVO2, BIT61, LST8, TOR2 and TSC11. TORC2 forms a homodimer. Contrary to TORC1, TORC2 does not bind to and is not sensitive to FKBP-rapamycin. AVO2 is peripherally associated to AVO1 and TSC11.

It localises to the cell membrane. Its subcellular location is the vacuole membrane. In terms of biological role, component of TORC2, which regulates cell cycle-dependent polarization of the actin-cytoskeleton and cell wall integrity. TORC2 controls polarity of the actin cytoskeleton, which is required for orienting the secretory pathway toward discrete growth sites, via the RHO1/PKC1/MAPK cell integrity pathway. The polypeptide is Target of rapamycin complex 2 subunit AVO2 (AVO2) (Saccharomyces cerevisiae (strain ATCC 204508 / S288c) (Baker's yeast)).